The following is a 484-amino-acid chain: Probable cytochrome P450 555A1 (484 aa).

A helical membrane pass occupies residues 1-21; that stretch reads MIIIVIVVFLFYFSFLNLNLN. Heme is bound at residue Cys432.

This sequence belongs to the cytochrome P450 family. Heme serves as cofactor.

It localises to the membrane. The chain is Probable cytochrome P450 555A1 (cyp555A1) from Dictyostelium discoideum (Social amoeba).